Here is a 662-residue protein sequence, read N- to C-terminus: DNA helicase/primase complex-associated protein (662 aa).

Belongs to the herpesviridae HEPA family. Associates with the primase and the helicase to form the helicase-primase complex. Interacts with the origin-binding protein. Interacts with the polymerase catalytic subunit.

Its subcellular location is the host nucleus. In terms of biological role, component of the helicase/primase complex. Unwinds the DNA at the replication forks and generates single-stranded DNA for both leading and lagging strand synthesis. The primase synthesizes short RNA primers on the lagging strand that the polymerase presumably elongates using dNTPs. The primase-associated factor has no known catalytic activity in the complex and may serve to facilitate the formation of the replisome by directly interacting with the origin-binding protein and the polymerase. The sequence is that of DNA helicase/primase complex-associated protein (U74) from Human herpesvirus 6B (strain Z29) (HHV-6 variant B).